The primary structure comprises 217 residues: Ras-related protein Rab-19 (217 aa).

GTP contacts are provided by S26, V28, G29, K30, T31, C32, Y42, E44, and T49. T31 lines the Mg(2+) pocket. The Switch 1 motif lies at 39 to 54; that stretch reads SGVYMEAQQNTIGVDF. Mg(2+) contacts are provided by T49 and D72. The Switch 2 motif lies at 74–89; the sequence is AGQERFRTITQSYYRS. The GTP site is built by G75, N130, K131, D133, S161, A162, and K163. Residues C215 and C217 are each lipidated (S-geranylgeranyl cysteine). At C217 the chain carries Cysteine methyl ester.

This sequence belongs to the small GTPase superfamily. Rab family. Mg(2+) is required as a cofactor.

The protein localises to the cell membrane. It carries out the reaction GTP + H2O = GDP + phosphate + H(+). Regulated by guanine nucleotide exchange factors (GEFs) which promote the exchange of bound GDP for free GTP. Regulated by GTPase activating proteins (GAPs) which increase the GTP hydrolysis activity. Inhibited by GDP dissociation inhibitors (GDIs). Functionally, the small GTPases Rab are key regulators of intracellular membrane trafficking, from the formation of transport vesicles to their fusion with membranes. Rabs cycle between an inactive GDP-bound form and an active GTP-bound form that is able to recruit to membranes different set of downstream effectors directly responsible for vesicle formation, movement, tethering and fusion. This is Ras-related protein Rab-19 (RAB19) from Bos taurus (Bovine).